Here is a 59-residue protein sequence, read N- to C-terminus: Membrane-associated ATPase epsilon chain (59 aa).

This sequence to E.hirae NtpH. As to quaternary structure, sul-ATPase is composed of six (or maybe five) subunits: alpha, beta, delta, gamma, C (proteolipid), and possibly epsilon.

The enzyme catalyses ATP + H2O + 4 H(+)(in) = ADP + phosphate + 5 H(+)(out). This is Membrane-associated ATPase epsilon chain (atpE) from Sulfurisphaera tokodaii (strain DSM 16993 / JCM 10545 / NBRC 100140 / 7) (Sulfolobus tokodaii).